A 495-amino-acid polypeptide reads, in one-letter code: Inner membrane ALBINO3-like protein 1, chloroplastic (495 aa).

Residues 76 to 96 (LGAIYVLADASASTAAAAVMP) form a helical membrane-spanning segment. At 97–206 (TAVDSAAGAA…VLYEQAGVNP (110 aa)) the chain is on the stromal side. A helical transmembrane segment spans residues 207-227 (LAGCLPTLATIPIFIGLFSSL). The Lumenal portion of the chain corresponds to 228 to 273 (TNVANDGLLDTQGFYFVPSLAGPTTMAMRQSGLGTSWLWPLGPDGA). The chain crosses the membrane as a helical span at residues 274–294 (PPIGWEDAAAYLTLPLLLVAV). Residues 295 to 317 (QYASSSVTSPPIDPKDENANTQR) lie on the Stromal side of the membrane. A helical membrane pass occupies residues 318–338 (ALLVFLPLMVGWFSLNVPAGL). Topologically, residues 339 to 441 (SLYYLANTVL…ASVSLSVDDS (103 aa)) are lumenal. A helical membrane pass occupies residues 442 to 462 (TAAIAGTATMAVTAGAPAAAM). Residues 463 to 495 (DPSKVNRRCKRRRLTSLVQDGSTASAAVAGASA) are Stromal-facing.

This sequence belongs to the OXA1/ALB3/YidC (TC 2.A.9.2) family. As to quaternary structure, associates with the LHCII complex and with the psaE subunit of the LHCI complex.

It is found in the plastid. The protein resides in the chloroplast thylakoid membrane. In terms of biological role, required for the insertion of some light-harvesting complexes (LHC) proteins into the chloroplast thylakoid membrane. Essential for the assembly and activity of LHC I and II. Its function is probably partly distinct from that of ALB3.2. The polypeptide is Inner membrane ALBINO3-like protein 1, chloroplastic (ALB3.1) (Chlamydomonas reinhardtii (Chlamydomonas smithii)).